Here is a 156-residue protein sequence, read N- to C-terminus: Endoribonuclease YbeY (156 aa).

Zn(2+) contacts are provided by His-122, His-126, and His-132.

Belongs to the endoribonuclease YbeY family. Requires Zn(2+) as cofactor.

The protein localises to the cytoplasm. Single strand-specific metallo-endoribonuclease involved in late-stage 70S ribosome quality control and in maturation of the 3' terminus of the 16S rRNA. In Bacillus cereus (strain ATCC 10987 / NRS 248), this protein is Endoribonuclease YbeY.